The sequence spans 461 residues: Coagulation factor IX (461 aa).

An N-terminal signal peptide occupies residues 1–28 (MQRVNMIMAESPGLITICLLGYLLSAEC). The propeptide occupies 29–46 (TVFLDHENANKILNRPKR). Residues tyrosine 47, asparagine 48, glutamate 53, glutamate 54, glutamate 61, glutamate 63, glutamate 66, glutamate 67, glutamate 72, glutamate 73, and glutamate 76 each contribute to the Ca(2+) site. The Gla domain occupies 47–92 (YNSGKLEEFVQGNLERECMEEKCSFEEAREVFENTERTTEFWKQYV). 4-carboxyglutamate is present on residues glutamate 53, glutamate 54, glutamate 61, glutamate 63, glutamate 66, glutamate 67, glutamate 72, glutamate 73, glutamate 76, glutamate 79, and glutamate 82. Residue glutamate 61 participates in Mg(2+) binding. Residues cysteine 64 and cysteine 69 are joined by a disulfide bond. Position 66 (glutamate 66) interacts with Mg(2+). Glutamate 72 serves as a coordination point for Mg(2+). Residue glutamate 76 coordinates Mg(2+). Glutamate 82 contributes to the Ca(2+) binding site. Glutamate 82 is a binding site for Mg(2+). O-linked (GalNAc...) threonine glycosylation is present at threonine 85. Ca(2+)-binding residues include glutamate 86, aspartate 93, glycine 94, and glutamine 96. Glutamate 86 carries the 4-carboxyglutamate modification. Glutamate 86 lines the Mg(2+) pocket. An EGF-like 1; calcium-binding domain is found at 93–129 (DGDQCESNPCLNGGSCKDDINSYECWCPFGFEGKNCE). Disulfide bonds link cysteine 97–cysteine 108, cysteine 102–cysteine 117, cysteine 119–cysteine 128, cysteine 134–cysteine 145, cysteine 141–cysteine 155, cysteine 157–cysteine 170, cysteine 178–cysteine 335, cysteine 252–cysteine 268, cysteine 382–cysteine 396, and cysteine 407–cysteine 435. Serine 99 is a glycosylation site (O-linked (Glc...) serine). The O-linked (Fuc...) serine glycan is linked to serine 107. Ca(2+)-binding residues include aspartate 110 and aspartate 111. A (3R)-3-hydroxyaspartate modification is found at aspartate 110. The residue at position 114 (serine 114) is a Phosphoserine. Positions 130 to 171 (LDVTCNIKNGRCEQFCKNSADNKVVCSCTEGYRLAENQKSCE) constitute an EGF-like 2 domain. The propeptide at 192-226 (AETVFPDVDYVNSTEAETILDNITQSTQSFNDFTR) is activation peptide. Tyrosine 201 is modified (sulfotyrosine). Phosphoserine is present on serine 204. Threonine 205 is subject to Phosphothreonine; alternate. Threonine 205 carries an O-linked (GalNAc...) threonine; alternate glycan. A glycan (N-linked (GlcNAc...) asparagine) is linked at asparagine 213. Threonine 215 and threonine 225 each carry an O-linked (GalNAc...) threonine glycan. One can recognise a Peptidase S1 domain in the interval 227–459 (VVGGEDAKPG…YVNWIKEKTK (233 aa)). Histidine 267 acts as the Charge relay system in catalysis. Glutamate 281, asparagine 283, glutamate 286, glutamate 288, and glutamate 291 together coordinate Ca(2+). Aspartate 315 serves as the catalytic Charge relay system. Catalysis depends on serine 411, which acts as the Charge relay system.

This sequence belongs to the peptidase S1 family. Heterodimer of a light chain and a heavy chain; disulfide-linked. Interacts (inactive and activated) with F11 (activated) in calcium-dependent manner. Interacts with SERPINC1. Activated by factor XIa, which excises the activation peptide. The propeptide can also be removed by snake venom protease. Post-translationally, the iron and 2-oxoglutarate dependent 3-hydroxylation of aspartate and asparagine is (R) stereospecific within EGF domains. Activated by coagulation factor VIIa-tissue factor (F7-F3) complex in calcium-dependent manner. In terms of processing, predominantly O-glucosylated at Ser-99 by POGLUT1 in vitro.

Its subcellular location is the secreted. The enzyme catalyses Selective cleavage of Arg-|-Ile bond in factor X to form factor Xa.. Factor IX is a vitamin K-dependent plasma protein that participates in the intrinsic pathway of blood coagulation by converting factor X to its active form in the presence of Ca(2+) ions, phospholipids, and factor VIIIa. The polypeptide is Coagulation factor IX (F9) (Pan troglodytes (Chimpanzee)).